A 239-amino-acid chain; its full sequence is Pyridoxine 5'-phosphate synthase (239 aa).

A 3-amino-2-oxopropyl phosphate-binding site is contributed by Asn-7. 9–10 (DH) contributes to the 1-deoxy-D-xylulose 5-phosphate binding site. 3-amino-2-oxopropyl phosphate is bound at residue Arg-18. His-43 (proton acceptor) is an active-site residue. Residues Arg-45 and His-50 each contribute to the 1-deoxy-D-xylulose 5-phosphate site. Glu-70 (proton acceptor) is an active-site residue. 1-deoxy-D-xylulose 5-phosphate is bound at residue Thr-100. The active-site Proton donor is the His-191. 3-amino-2-oxopropyl phosphate is bound by residues Gly-192 and 213–214 (GH).

This sequence belongs to the PNP synthase family. Homooctamer; tetramer of dimers.

It localises to the cytoplasm. The enzyme catalyses 3-amino-2-oxopropyl phosphate + 1-deoxy-D-xylulose 5-phosphate = pyridoxine 5'-phosphate + phosphate + 2 H2O + H(+). The protein operates within cofactor biosynthesis; pyridoxine 5'-phosphate biosynthesis; pyridoxine 5'-phosphate from D-erythrose 4-phosphate: step 5/5. Catalyzes the complicated ring closure reaction between the two acyclic compounds 1-deoxy-D-xylulose-5-phosphate (DXP) and 3-amino-2-oxopropyl phosphate (1-amino-acetone-3-phosphate or AAP) to form pyridoxine 5'-phosphate (PNP) and inorganic phosphate. The chain is Pyridoxine 5'-phosphate synthase from Trichormus variabilis (strain ATCC 29413 / PCC 7937) (Anabaena variabilis).